The sequence spans 222 residues: Superoxide dismutase [Mn], mitochondrial (222 aa).

Residues 1–24 (MLCRAACSAGRRLGPAASTAGSRH) constitute a mitochondrion transit peptide. His-50 contacts Mn(2+). Residue Tyr-58 is modified to 3'-nitrotyrosine. An N6-acetyllysine; alternate mark is found at Lys-68 and Lys-75. 2 positions are modified to N6-succinyllysine; alternate: Lys-68 and Lys-75. His-98 contacts Mn(2+). Position 114 is an N6-acetyllysine (Lys-114). Residues Lys-122 and Lys-130 each carry the N6-acetyllysine; alternate modification. An N6-succinyllysine; alternate mark is found at Lys-122 and Lys-130. Positions 183 and 187 each coordinate Mn(2+). At Lys-202 the chain carries N6-acetyllysine.

It belongs to the iron/manganese superoxide dismutase family. Homotetramer. It depends on Mn(2+) as a cofactor. Post-translationally, nitrated under oxidative stress. Nitration coupled with oxidation inhibits the catalytic activity. Acetylation at Lys-122 decreases enzymatic activity. Deacetylated by SIRT3 upon exposure to ionizing radiations or after long fasting. In terms of processing, polyubiquitinated; leading to proteasomal degradation. Deubiquitinated by USP36 which increases protein stability.

Its subcellular location is the mitochondrion matrix. It catalyses the reaction 2 superoxide + 2 H(+) = H2O2 + O2. Functionally, destroys superoxide anion radicals which are normally produced within the cells and which are toxic to biological systems. The sequence is that of Superoxide dismutase [Mn], mitochondrial (Sod2) from Rattus norvegicus (Rat).